The chain runs to 147 residues: Hemoglobin subunit beta-2 (147 aa).

The region spanning 3-147 is the Globin domain; sequence EWTDSERAII…VVSALGRQYH (145 aa). Positions 64 and 93 each coordinate heme b.

This sequence belongs to the globin family. In terms of assembly, hb 3 is a heterotetramer of two alpha-2 and two beta-2 chains. In terms of tissue distribution, red blood cells.

Its function is as follows. Involved in oxygen transport from gills to the various peripheral tissues. The sequence is that of Hemoglobin subunit beta-2 (hbb2) from Arctogadus glacialis (Arctic cod).